The following is a 180-amino-acid chain: Cell wall / vacuolar inhibitor of fructosidase 2 (180 aa).

A signal peptide spans 1–23 (MASSLIFLLLVTLTFSASTLISA). Residue Asn26 is glycosylated (N-linked (GlcNAc...) asparagine). Cysteines 35 and 44 form a disulfide. N-linked (GlcNAc...) asparagine glycans are attached at residues Asn73 and Asn84. A disulfide bridge links Cys101 with Cys141.

Belongs to the PMEI family. As to expression, mostly expressed at low levels in seedlings, stems, leaves and flowers (in all organs), and, to a lower extent, in roots and siliques.

The protein resides in the vacuole. Inhibits fructosidases from both cell wall (cell wall invertase CWI) and vacuoles (vacuolar invertase VI). This is Cell wall / vacuolar inhibitor of fructosidase 2 (C/VIF2) from Arabidopsis thaliana (Mouse-ear cress).